The sequence spans 156 residues: V-type sodium ATPase subunit K (156 aa).

The next 4 membrane-spanning stretches (helical) occupy residues 11 to 31 (GMVF…IGSA), 60 to 80 (LLPG…FINL), 89 to 109 (GLNF…SGIA), and 132 to 152 (IIFA…SFLL).

Belongs to the V-ATPase proteolipid subunit family. In terms of processing, the N-terminus is blocked.

The protein localises to the cell membrane. Its function is as follows. Involved in ATP-driven sodium extrusion. In Enterococcus hirae (strain ATCC 9790 / DSM 20160 / JCM 8729 / LMG 6399 / NBRC 3181 / NCIMB 6459 / NCDO 1258 / NCTC 12367 / WDCM 00089 / R), this protein is V-type sodium ATPase subunit K (ntpK).